Consider the following 882-residue polypeptide: MRRMFGDCQVLSSMAAMAGASSSADALFASPLIPNPALAGFMSSSAAMPFHHFSNAAATLIPKEEGLMGGLHVAKDEEMDLEMDMELSGGSGSAHLDGLLSFADVDDDHKPQHSGHDQPPDAAQPSGAAGGNAKKKRYHRHTAHQIQQMEALFKECPHPDDKQRLKLSQELGLKPRQVKFWFQNRRTQMKAQQDRADNVILRAENENLKSDNFRLQAAIRNVVCPNCGHAAVLADMSYEEQQLRIENARLKDELDRLACIATRYGGGGGRQPVLSTSALSCISAPPPVLMPPLDLDMNVYSRHFAEQAPVMGCGDLIPPPVVPQHDGAAAYMGAMMAPVQEQDKQLVVDLAATAADQLARMCRAGEPLWVRQRGAEVMAVEEHARMFSWPVDGAKQGDGGAVARAEGTRDNAVVIMNSINLVDAFLDANKWMELFPSIVCKARTIQIINHGAASGHLGSGTLLLMQAEVQFLSPLVAAREVVFFRYCVHNADEGSWAIVDFPAEGFEEGLLQASVVRCRRRPSGCIIQDMPNGYSRVVWVEHMEMVGEEKPLQPVFRDYVASGAAFGATRWLSILQRQCERLASELARNIADLGVIRTPEARTNMMKLSQRMITTFCANISASGTQSWTALSDSTQDTIRVTTRKNTEPGQPSGVILTAVSTSWLPFTHQQVFELLADEQQRCQLEILSNGGSLHEVAHIANGSHPRNCISLLRINAASNSSQNVELLLQESSTHPDGGSLVVFATVDVDAIQVTMSGEDPSYIPLLPLGFAIFPATSPSPAAAPTISSSTTTTTGNGNGETSSTPPRNSSSNNNNADELLPPNGCLLTVGMQVLASAVPSAKLNLSSVTAINSHVCNAIHQITAALKGSAGGAGGEPASDQ.

Residues 104-144 (DVDDDHKPQHSGHDQPPDAAQPSGAAGGNAKKKRYHRHTAH) are disordered. A compositionally biased stretch (basic and acidic residues) spans 107–119 (DDHKPQHSGHDQP). Positions 133–143 (AKKKRYHRHTA) are enriched in basic residues. Positions 134–193 (KKKRYHRHTAHQIQQMEALFKECPHPDDKQRLKLSQELGLKPRQVKFWFQNRRTQMKAQQ) form a DNA-binding region, homeobox. Residues 200 to 263 (ILRAENENLK…LDRLACIATR (64 aa)) adopt a coiled-coil conformation. In terms of domain architecture, START spans 340 to 584 (QEQDKQLVVD…LQRQCERLAS (245 aa)). Over residues 782–816 (AAAPTISSSTTTTTGNGNGETSSTPPRNSSSNNNN) the composition is skewed to low complexity. The interval 782-820 (AAAPTISSSTTTTTGNGNGETSSTPPRNSSSNNNNADEL) is disordered.

It belongs to the HD-ZIP homeobox family. Class IV subfamily.

It is found in the nucleus. Functionally, probable transcription factor. The chain is Homeobox-leucine zipper protein ROC3 (ROC3) from Oryza sativa subsp. indica (Rice).